A 148-amino-acid polypeptide reads, in one-letter code: Lysozyme C (148 aa).

Residues 1-18 (MKAVIILGLVLLSVTVQG) form the signal peptide. Residues 19–148 (KIFERCELAR…VSQYVQGCGV (130 aa)) enclose the C-type lysozyme domain. Cystine bridges form between C24–C146, C48–C134, C83–C99, and C95–C113. Residues E53 and D71 contribute to the active site.

This sequence belongs to the glycosyl hydrolase 22 family. As to quaternary structure, monomer.

The protein resides in the secreted. The enzyme catalyses Hydrolysis of (1-&gt;4)-beta-linkages between N-acetylmuramic acid and N-acetyl-D-glucosamine residues in a peptidoglycan and between N-acetyl-D-glucosamine residues in chitodextrins.. In terms of biological role, lysozymes have primarily a bacteriolytic function; those in tissues and body fluids are associated with the monocyte-macrophage system and enhance the activity of immunoagents. This Miopithecus talapoin (Angolan talapoin) protein is Lysozyme C (LYZ).